Reading from the N-terminus, the 215-residue chain is 3-demethoxyubiquinol 3-hydroxylase (215 aa).

Fe cation contacts are provided by E64, E94, H97, E146, E178, and H181.

The protein belongs to the COQ7 family. Fe cation is required as a cofactor.

The protein resides in the cell membrane. The catalysed reaction is a 5-methoxy-2-methyl-3-(all-trans-polyprenyl)benzene-1,4-diol + AH2 + O2 = a 3-demethylubiquinol + A + H2O. It participates in cofactor biosynthesis; ubiquinone biosynthesis. Functionally, catalyzes the hydroxylation of 2-nonaprenyl-3-methyl-6-methoxy-1,4-benzoquinol during ubiquinone biosynthesis. The protein is 3-demethoxyubiquinol 3-hydroxylase of Coxiella burnetii (strain CbuG_Q212) (Coxiella burnetii (strain Q212)).